Reading from the N-terminus, the 686-residue chain is Protein MxiA (686 aa).

6 helical membrane passes run Leu28 to Phe52, Phe105 to Ile129, Ala197 to Met216, Ile232 to Val256, Ile274 to Gly292, and Phe299 to Tyr315.

The protein belongs to the FHIPEP (flagella/HR/invasion proteins export pore) family.

Its subcellular location is the cell inner membrane. Functionally, necessary for the secretion of IPA invasins. The sequence is that of Protein MxiA (mxiA) from Shigella flexneri.